We begin with the raw amino-acid sequence, 199 residues long: Protein GrpE (199 aa).

A disordered region spans residues 1-40; it reads MEKKKHGTNSISEALKVKAAVEQETATPEPTPQSETESAD. A compositionally biased stretch (polar residues) spans 24–36; sequence ETATPEPTPQSET.

Belongs to the GrpE family. Homodimer.

It localises to the cytoplasm. Functionally, participates actively in the response to hyperosmotic and heat shock by preventing the aggregation of stress-denatured proteins, in association with DnaK and GrpE. It is the nucleotide exchange factor for DnaK and may function as a thermosensor. Unfolded proteins bind initially to DnaJ; upon interaction with the DnaJ-bound protein, DnaK hydrolyzes its bound ATP, resulting in the formation of a stable complex. GrpE releases ADP from DnaK; ATP binding to DnaK triggers the release of the substrate protein, thus completing the reaction cycle. Several rounds of ATP-dependent interactions between DnaJ, DnaK and GrpE are required for fully efficient folding. This Geotalea uraniireducens (strain Rf4) (Geobacter uraniireducens) protein is Protein GrpE.